Reading from the N-terminus, the 242-residue chain is uncharacterized protein (242 aa).

The next 2 helical transmembrane spans lie at 4–24 and 34–54; these read NYQV…YYVV and LLFG…WLFG. An N-linked (GlcNAc...) asparagine; by host glycan is attached at Asn73. 3 consecutive transmembrane segments (helical) span residues 74-94, 106-126, and 162-182; these read YTIV…VIGY, VLTV…YGGF, and LDVF…FVMY. A glycan (N-linked (GlcNAc...) asparagine; by host) is linked at Asn185. The next 2 membrane-spanning stretches (helical) occupy residues 189–209 and 217–237; these read VIGL…APTL and CLLS…STGI.

The protein resides in the membrane. This is an uncharacterized protein from Acanthamoeba polyphaga mimivirus (APMV).